The chain runs to 268 residues: MERYQQLFDRLASNKEGAFVPFVTLGDPNPALSLQIIDTLVEAGADALELGIPFSDPLADGPTIQSAALRAFASGVTPTQCFEMLAAIRQKHPSMPIGLLMYANLVFHKGIDAFYQRCAEVGVDSVLIADVPYEESAPFRAAAIRHGIAPIFICPPNADDDLLREISSHGRGYTYLLSRAGVTGTESRAQLPLHHLVNKLREYHAAPPLQGFGISEPAQVRDALQAGAAGAISGSAIVKIIEQNHTQPAEMLTRLATFVSEMKAATRA.

Residues glutamate 49 and aspartate 60 each act as proton acceptor in the active site.

This sequence belongs to the TrpA family. As to quaternary structure, tetramer of two alpha and two beta chains.

It carries out the reaction (1S,2R)-1-C-(indol-3-yl)glycerol 3-phosphate + L-serine = D-glyceraldehyde 3-phosphate + L-tryptophan + H2O. Its pathway is amino-acid biosynthesis; L-tryptophan biosynthesis; L-tryptophan from chorismate: step 5/5. Its function is as follows. The alpha subunit is responsible for the aldol cleavage of indoleglycerol phosphate to indole and glyceraldehyde 3-phosphate. The sequence is that of Tryptophan synthase alpha chain from Serratia proteamaculans (strain 568).